Here is a 109-residue protein sequence, read N- to C-terminus: Ribonuclease P protein component 2 (109 aa).

Belongs to the eukaryotic/archaeal RNase P protein component 2 family. Consists of a catalytic RNA component and at least 4-5 protein subunits.

The protein resides in the cytoplasm. The enzyme catalyses Endonucleolytic cleavage of RNA, removing 5'-extranucleotides from tRNA precursor.. Its function is as follows. Part of ribonuclease P, a protein complex that generates mature tRNA molecules by cleaving their 5'-ends. This is Ribonuclease P protein component 2 from Archaeoglobus fulgidus (strain ATCC 49558 / DSM 4304 / JCM 9628 / NBRC 100126 / VC-16).